Here is a 419-residue protein sequence, read N- to C-terminus: Serine--tRNA ligase (419 aa).

226-228 (TSE) lines the L-serine pocket. ATP is bound by residues 257–259 (RRE) and V273. E280 serves as a coordination point for L-serine. 344–347 (ELTS) contacts ATP. T379 is an L-serine binding site.

This sequence belongs to the class-II aminoacyl-tRNA synthetase family. Type-1 seryl-tRNA synthetase subfamily. Homodimer. The tRNA molecule binds across the dimer.

The protein localises to the cytoplasm. It catalyses the reaction tRNA(Ser) + L-serine + ATP = L-seryl-tRNA(Ser) + AMP + diphosphate + H(+). It carries out the reaction tRNA(Sec) + L-serine + ATP = L-seryl-tRNA(Sec) + AMP + diphosphate + H(+). It functions in the pathway aminoacyl-tRNA biosynthesis; selenocysteinyl-tRNA(Sec) biosynthesis; L-seryl-tRNA(Sec) from L-serine and tRNA(Sec): step 1/1. Catalyzes the attachment of serine to tRNA(Ser). Is also able to aminoacylate tRNA(Sec) with serine, to form the misacylated tRNA L-seryl-tRNA(Sec), which will be further converted into selenocysteinyl-tRNA(Sec). The chain is Serine--tRNA ligase from Mycolicibacterium vanbaalenii (strain DSM 7251 / JCM 13017 / BCRC 16820 / KCTC 9966 / NRRL B-24157 / PYR-1) (Mycobacterium vanbaalenii).